The chain runs to 57 residues: Large ribosomal subunit protein bL32 (57 aa).

This sequence belongs to the bacterial ribosomal protein bL32 family.

The polypeptide is Large ribosomal subunit protein bL32 (rpmF) (Halalkalibacterium halodurans (strain ATCC BAA-125 / DSM 18197 / FERM 7344 / JCM 9153 / C-125) (Bacillus halodurans)).